We begin with the raw amino-acid sequence, 268 residues long: Probable histidine-binding protein (268 aa).

Positions 1 to 20 (MNMKKWIAAALACSALALSA) are cleaved as a signal peptide. Cys-21 carries N-palmitoyl cysteine lipidation. Residue Cys-21 is the site of S-diacylglycerol cysteine attachment.

This sequence belongs to the bacterial solute-binding protein 3 family.

The protein resides in the cell membrane. Involved in histidine transport. The protein is Probable histidine-binding protein (hisJ) of Neisseria gonorrhoeae.